The sequence spans 205 residues: Regulator of G-protein signaling 4 (205 aa).

3 S-palmitoyl cysteine lipidation sites follow: cysteine 2, cysteine 12, and cysteine 95. An RGS domain is found at 62–178 (SLENLINHEC…LKSRFYLDLT (117 aa)).

Either Cys-2 or Cys-12 or both are palmitoylated. In terms of processing, phosphorylated by cyclic GMP-dependent protein kinase.

Inhibits signal transduction by increasing the GTPase activity of G protein alpha subunits thereby driving them into their inactive GDP-bound form. Activity on G(z)-alpha is inhibited by phosphorylation of the G-protein. Activity on G(z)-alpha and G(i)-alpha-1 is inhibited by palmitoylation of the G-protein. The sequence is that of Regulator of G-protein signaling 4 (Rgs4) from Rattus norvegicus (Rat).